The chain runs to 89 residues: Small ribosomal subunit protein uS14 (89 aa).

Belongs to the universal ribosomal protein uS14 family. As to quaternary structure, part of the 30S ribosomal subunit. Contacts proteins S3 and S10.

Functionally, binds 16S rRNA, required for the assembly of 30S particles and may also be responsible for determining the conformation of the 16S rRNA at the A site. This chain is Small ribosomal subunit protein uS14, found in Oenococcus oeni (strain ATCC BAA-331 / PSU-1).